The following is a 432-amino-acid chain: Enolase (432 aa).

Gln-163 lines the (2R)-2-phosphoglycerate pocket. The active-site Proton donor is Glu-205. Mg(2+) contacts are provided by Asp-242, Glu-288, and Asp-315. Lys-340, Arg-369, Ser-370, and Lys-391 together coordinate (2R)-2-phosphoglycerate. The active-site Proton acceptor is Lys-340.

The protein belongs to the enolase family. It depends on Mg(2+) as a cofactor.

It localises to the cytoplasm. Its subcellular location is the secreted. The protein resides in the cell surface. It catalyses the reaction (2R)-2-phosphoglycerate = phosphoenolpyruvate + H2O. It functions in the pathway carbohydrate degradation; glycolysis; pyruvate from D-glyceraldehyde 3-phosphate: step 4/5. In terms of biological role, catalyzes the reversible conversion of 2-phosphoglycerate (2-PG) into phosphoenolpyruvate (PEP). It is essential for the degradation of carbohydrates via glycolysis. The protein is Enolase of Enterococcus faecalis (strain ATCC 700802 / V583).